Consider the following 155-residue polypeptide: Keratin-associated protein 4-7 (155 aa).

20 tandem repeats follow at residues 5–9, 24–28, 29–33, 34–38, 44–48, 49–53, 54–58, 59–63, 64–68, 69–73, 74–78, 79–83, 84–88, 89–93, 94–98, 99–103, 104–108, 109–113, 114–118, and 119–123. The tract at residues 5–123 is 20 X 5 AA repeats of C-C-[GIKRQVHEML]-[SPTRV]-[STVQRCP]; sequence CCGSVCSDQG…CCRPCCCLRP (119 aa).

The protein belongs to the KRTAP type 4 family. In terms of assembly, interacts with hair keratins. Expressed in the hair follicles.

Functionally, in the hair cortex, hair keratin intermediate filaments are embedded in an interfilamentous matrix, consisting of hair keratin-associated proteins (KRTAP), which are essential for the formation of a rigid and resistant hair shaft through their extensive disulfide bond cross-linking with abundant cysteine residues of hair keratins. The matrix proteins include the high-sulfur and high-glycine-tyrosine keratins. This is Keratin-associated protein 4-7 (KRTAP4-7) from Homo sapiens (Human).